We begin with the raw amino-acid sequence, 374 residues long: Queuine tRNA-ribosyltransferase (374 aa).

D89 acts as the Proton acceptor in catalysis. Substrate is bound by residues D89 to F93, D143, Q187, and G214. Residues G245–D251 form an RNA binding region. Catalysis depends on D264, which acts as the Nucleophile. Residues T269 to R273 form an RNA binding; important for wobble base 34 recognition region. The Zn(2+) site is built by C302, C304, C307, and H333.

This sequence belongs to the queuine tRNA-ribosyltransferase family. As to quaternary structure, homodimer. Within each dimer, one monomer is responsible for RNA recognition and catalysis, while the other monomer binds to the replacement base PreQ1. Zn(2+) is required as a cofactor.

It catalyses the reaction 7-aminomethyl-7-carbaguanine + guanosine(34) in tRNA = 7-aminomethyl-7-carbaguanosine(34) in tRNA + guanine. Its pathway is tRNA modification; tRNA-queuosine biosynthesis. Functionally, catalyzes the base-exchange of a guanine (G) residue with the queuine precursor 7-aminomethyl-7-deazaguanine (PreQ1) at position 34 (anticodon wobble position) in tRNAs with GU(N) anticodons (tRNA-Asp, -Asn, -His and -Tyr). Catalysis occurs through a double-displacement mechanism. The nucleophile active site attacks the C1' of nucleotide 34 to detach the guanine base from the RNA, forming a covalent enzyme-RNA intermediate. The proton acceptor active site deprotonates the incoming PreQ1, allowing a nucleophilic attack on the C1' of the ribose to form the product. After dissociation, two additional enzymatic reactions on the tRNA convert PreQ1 to queuine (Q), resulting in the hypermodified nucleoside queuosine (7-(((4,5-cis-dihydroxy-2-cyclopenten-1-yl)amino)methyl)-7-deazaguanosine). This Yersinia pseudotuberculosis serotype O:1b (strain IP 31758) protein is Queuine tRNA-ribosyltransferase.